Here is a 248-residue protein sequence, read N- to C-terminus: tRNA pseudouridine synthase A (248 aa).

The active-site Nucleophile is Asp-52. A substrate-binding site is contributed by Tyr-111.

The protein belongs to the tRNA pseudouridine synthase TruA family. In terms of assembly, homodimer.

The enzyme catalyses uridine(38/39/40) in tRNA = pseudouridine(38/39/40) in tRNA. Formation of pseudouridine at positions 38, 39 and 40 in the anticodon stem and loop of transfer RNAs. The polypeptide is tRNA pseudouridine synthase A (Methylocella silvestris (strain DSM 15510 / CIP 108128 / LMG 27833 / NCIMB 13906 / BL2)).